Reading from the N-terminus, the 235-residue chain is Ribonuclease 3 (235 aa).

In terms of domain architecture, RNase III spans 6-131 (IDQLKKLTGH…LIAVIYLDGG (126 aa)). Glu-44 is a Mg(2+) binding site. Residue Asp-48 is part of the active site. 2 residues coordinate Mg(2+): Asp-117 and Glu-120. Residue Glu-120 is part of the active site. A DRBM domain is found at 156-225 (DAKTELQEWA…AEKILRREGM (70 aa)).

This sequence belongs to the ribonuclease III family. Homodimer. It depends on Mg(2+) as a cofactor.

It is found in the cytoplasm. The catalysed reaction is Endonucleolytic cleavage to 5'-phosphomonoester.. Functionally, digests double-stranded RNA. Involved in the processing of primary rRNA transcript to yield the immediate precursors to the large and small rRNAs (23S and 16S). Processes some mRNAs, and tRNAs when they are encoded in the rRNA operon. Processes pre-crRNA and tracrRNA of type II CRISPR loci if present in the organism. The sequence is that of Ribonuclease 3 from Bartonella bacilliformis (strain ATCC 35685 / KC583 / Herrer 020/F12,63).